A 441-amino-acid chain; its full sequence is tRNA-2-methylthio-N(6)-dimethylallyladenosine synthase (441 aa).

In terms of domain architecture, MTTase N-terminal spans 2–117 (KGLYIKSYGC…LPELLVKAHR (116 aa)). Residues Cys11, Cys47, Cys80, Cys157, Cys161, and Cys164 each contribute to the [4Fe-4S] cluster site. A Radical SAM core domain is found at 143–374 (KNQETSAFIS…QKLLREQQLA (232 aa)).

The protein belongs to the methylthiotransferase family. MiaB subfamily. As to quaternary structure, monomer. It depends on [4Fe-4S] cluster as a cofactor.

Its subcellular location is the cytoplasm. It catalyses the reaction N(6)-dimethylallyladenosine(37) in tRNA + (sulfur carrier)-SH + AH2 + 2 S-adenosyl-L-methionine = 2-methylsulfanyl-N(6)-dimethylallyladenosine(37) in tRNA + (sulfur carrier)-H + 5'-deoxyadenosine + L-methionine + A + S-adenosyl-L-homocysteine + 2 H(+). Functionally, catalyzes the methylthiolation of N6-(dimethylallyl)adenosine (i(6)A), leading to the formation of 2-methylthio-N6-(dimethylallyl)adenosine (ms(2)i(6)A) at position 37 in tRNAs that read codons beginning with uridine. This is tRNA-2-methylthio-N(6)-dimethylallyladenosine synthase from Ehrlichia canis (strain Jake).